The following is a 351-amino-acid chain: Adenine deaminase (351 aa).

The Zn(2+) site is built by His-20, His-22, and His-200. The active-site Proton donor is Glu-203. Residue Asp-281 coordinates Zn(2+). Asp-282 contacts substrate.

It belongs to the metallo-dependent hydrolases superfamily. Adenosine and AMP deaminases family. Adenine deaminase type 2 subfamily. Requires Zn(2+) as cofactor.

The catalysed reaction is adenine + H2O + H(+) = hypoxanthine + NH4(+). Catalyzes the hydrolytic deamination of adenine to hypoxanthine. Plays an important role in the purine salvage pathway and in nitrogen catabolism. This Cupriavidus pinatubonensis (strain JMP 134 / LMG 1197) (Cupriavidus necator (strain JMP 134)) protein is Adenine deaminase.